The primary structure comprises 140 residues: Sex-regulated protein janus-B (140 aa).

Residue Arg-42 participates in substrate binding. The active-site Proton acceptor is the His-69. 110–112 contributes to the substrate binding site; that stretch reads SRT.

Belongs to the janus family.

Functionally, janA and janB regulate somatic sex differentiation. The protein is Sex-regulated protein janus-B (janB) of Drosophila yakuba (Fruit fly).